The sequence spans 175 residues: RNA pyrophosphohydrolase (175 aa).

The Nudix hydrolase domain maps to 6-149; it reads GYRPNVGIVI…KRDVYRRVMK (144 aa). The short motif at 38–59 is the Nudix box element; the sequence is GGINPGETPEQAMYRELFEEVG.

Belongs to the Nudix hydrolase family. RppH subfamily. A divalent metal cation serves as cofactor.

Its function is as follows. Accelerates the degradation of transcripts by removing pyrophosphate from the 5'-end of triphosphorylated RNA, leading to a more labile monophosphorylated state that can stimulate subsequent ribonuclease cleavage. This Yersinia pseudotuberculosis serotype O:1b (strain IP 31758) protein is RNA pyrophosphohydrolase.